A 323-amino-acid polypeptide reads, in one-letter code: MAGRPGSSNAEAAGAVGPTDEARGQAESSQKIEDLMEMVKKLQKVGSLEPRVEVLINRINEVQQAKKKASEELGDARTVWETLQKELDSLSGEKVRLKEILSKKQETLRVLRLHCQDKENEAQRKQTMLQECKERISALNSQIEQEKNKQRQLRLDFEEQLEDLMGQYKDLWEFHKPERLALEISTLDSGKEQLLKEEKLVEAKLEDVKHRLCSQFGAKGHTINEGLFLRSPEAAAVVHLFEEENRKAQELLEAAAQRQEQLQQKCQQLQQKRQRLKEELEKLGVQVLAQAQSKQEEEAGLGEAANPKPLGVSEEKDQEPSTK.

Positions 1–10 (MAGRPGSSNA) are enriched in polar residues. 2 disordered regions span residues 1–31 (MAGRPGSSNAEAAGAVGPTDEARGQAESSQK) and 294–323 (KQEEEAGLGEAANPKPLGVSEEKDQEPSTK). 2 stretches are compositionally biased toward basic and acidic residues: residues 20–31 (DEARGQAESSQK) and 313–323 (SEEKDQEPSTK). A coiled-coil region spans residues 25-290 (QAESSQKIED…EKLGVQVLAQ (266 aa)).

It belongs to the SYCE family. As to quaternary structure, homodimer. Found in a complex with SYCP1 and SYCE2. Interacts with SYCP1, SYCE2 and SYCE3. Interacts with SIX6OS1.

It localises to the nucleus. The protein localises to the chromosome. Major component of the transverse central element of synaptonemal complexes (SCS), formed between homologous chromosomes during meiotic prophase. Requires SYCP1 in order to be incorporated into the central element. May have a role in the synaptonemal complex assembly, stabilization and recombination. The polypeptide is Synaptonemal complex central element protein 1 (SYCE1) (Bos taurus (Bovine)).